We begin with the raw amino-acid sequence, 1029 residues long: FYVE, RhoGEF and PH domain-containing protein tag-77 (1029 aa).

Basic and acidic residues-rich tracts occupy residues M1–D12 and T20–F39. Disordered stretches follow at residues M1–E155, V185–T254, and N279–D370. Positions Q42–P56 are enriched in pro residues. Low complexity-rich tracts occupy residues P76–N85 and S122–S133. Composition is skewed to polar residues over residues S141–E155 and P200–S211. The segment covering D212 to M227 has biased composition (acidic residues). A compositionally biased stretch (low complexity) spans S316 to S334. Residues M335–S347 show a composition bias toward polar residues. Residues K375 to K572 form the DH domain. The PH domain occupies N593–Y696. Residues C810, C823, C826, C831, C834, C851, and C854 each coordinate Zn(2+). An FYVE-type; degenerate zinc finger spans residues C810–Y859.

The protein resides in the cytoplasm. The protein localises to the cytoskeleton. Activates cdc-42, a member of the Ras-like family of Rho- and Rac proteins, by exchanging bound GDP for free GTP. May play a role in regulating the actin cytoskeleton and cell shape. Required for normal lifespan. The sequence is that of FYVE, RhoGEF and PH domain-containing protein tag-77 from Caenorhabditis elegans.